The following is a 138-amino-acid chain: Basic phospholipase A2 canebraxin B (138 aa).

Positions 1–16 (MRALWIVAVLLVAVEG) are cleaved as a signal peptide. Disulfide bonds link Cys42–Cys131, Cys44–Cys60, Cys59–Cys111, Cys65–Cys138, Cys66–Cys104, Cys73–Cys97, and Cys91–Cys102. Residues Tyr43, Gly45, and Gly47 each coordinate Ca(2+). His63 is an active-site residue. Asp64 serves as a coordination point for Ca(2+). The active site involves Asp105.

Belongs to the phospholipase A2 family. Group II subfamily. As to quaternary structure, heterodimer of an acidic subunit and a basic chain. The acidic subunit is non-toxic, without enzymatic activity and comprises 3 peptides that are cross-linked by 7 disulfide bridges. The basic subunit is toxic, has phospholipase A2 activity and is composed of a single chain. Ca(2+) is required as a cofactor. As to expression, expressed by the venom gland.

The protein resides in the secreted. The catalysed reaction is a 1,2-diacyl-sn-glycero-3-phosphocholine + H2O = a 1-acyl-sn-glycero-3-phosphocholine + a fatty acid + H(+). Functionally, snake venom phospholipase A2 (PLA2) that shows presynaptic neurotoxicity. PLA2 catalyzes the calcium-dependent hydrolysis of the 2-acyl groups in 3-sn-phosphoglycerides. The protein is Basic phospholipase A2 canebraxin B of Crotalus horridus (Timber rattlesnake).